The following is a 596-amino-acid chain: NADH-quinone oxidoreductase subunit C/D (596 aa).

The NADH dehydrogenase I subunit C stretch occupies residues Met-1 to Gln-186. An NADH dehydrogenase I subunit D region spans residues Asp-210–Arg-596.

The protein in the N-terminal section; belongs to the complex I 30 kDa subunit family. This sequence in the C-terminal section; belongs to the complex I 49 kDa subunit family. In terms of assembly, NDH-1 is composed of 13 different subunits. Subunits NuoB, CD, E, F, and G constitute the peripheral sector of the complex.

It is found in the cell inner membrane. It catalyses the reaction a quinone + NADH + 5 H(+)(in) = a quinol + NAD(+) + 4 H(+)(out). Functionally, NDH-1 shuttles electrons from NADH, via FMN and iron-sulfur (Fe-S) centers, to quinones in the respiratory chain. The immediate electron acceptor for the enzyme in this species is believed to be ubiquinone. Couples the redox reaction to proton translocation (for every two electrons transferred, four hydrogen ions are translocated across the cytoplasmic membrane), and thus conserves the redox energy in a proton gradient. In Salmonella dublin (strain CT_02021853), this protein is NADH-quinone oxidoreductase subunit C/D.